Here is a 236-residue protein sequence, read N- to C-terminus: UPF0502 protein Bxeno_B1639 (236 aa).

Belongs to the UPF0502 family.

In Paraburkholderia xenovorans (strain LB400), this protein is UPF0502 protein Bxeno_B1639.